Here is a 150-residue protein sequence, read N- to C-terminus: Arginine repressor (150 aa).

Belongs to the ArgR family.

It is found in the cytoplasm. The protein operates within amino-acid biosynthesis; L-arginine biosynthesis [regulation]. Its function is as follows. Regulates arginine biosynthesis genes. The chain is Arginine repressor from Desulforudis audaxviator (strain MP104C).